Here is a 132-residue protein sequence, read N- to C-terminus: uncharacterized protein (132 aa).

This is an uncharacterized protein from Archaeoglobus fulgidus (strain ATCC 49558 / DSM 4304 / JCM 9628 / NBRC 100126 / VC-16).